The following is a 172-amino-acid chain: Adenylate kinase isoenzyme 6 (172 aa).

Positions 13, 15, 16, 17, and 18 each coordinate ATP. Residues 33-56 (NVGDLAREGELYDGFDEEYNCPIL) are NMPbind. The LID stretch occupies residues 108 to 118 (TRGYSEKKLND). ATP is bound by residues Arg-109 and Lys-148.

Belongs to the adenylate kinase family. AK6 subfamily. Monomer and homodimer. Interacts with small ribosomal subunit protein uS11. Not a structural component of 43S pre-ribosomes, but transiently interacts with them by binding to uS11. Interacts with COIL (via C-terminus).

It is found in the cytoplasm. It localises to the nucleus. Its subcellular location is the nucleoplasm. The protein resides in the cajal body. The enzyme catalyses AMP + ATP = 2 ADP. It carries out the reaction ATP + H2O = ADP + phosphate + H(+). Its function is as follows. Broad-specificity nucleoside monophosphate (NMP) kinase that catalyzes the reversible transfer of the terminal phosphate group between nucleoside triphosphates and monophosphates. Also has ATPase activity. Involved in the late cytoplasmic maturation steps of the 40S ribosomal particles, specifically 18S rRNA maturation. While NMP activity is not required for ribosome maturation, ATPase activity is. Associates transiently with small ribosomal subunit protein uS11. ATP hydrolysis breaks the interaction with uS11. May temporarily remove uS11 from the ribosome to enable a conformational change of the ribosomal RNA that is needed for the final maturation step of the small ribosomal subunit. Its NMP activity may have a role in nuclear energy homeostasis. May be involved in regulation of Cajal body (CB) formation. This is Adenylate kinase isoenzyme 6 from Oryctolagus cuniculus (Rabbit).